We begin with the raw amino-acid sequence, 419 residues long: MSYYGSSYRIVNVDSKYPGYPPEHAIAEKRRARRRLLHKDGSCNVYFKHIFGEWGSYMVDIFTTLVDTKWRHMFVVFSLSYILSWLIFGSIFWLIALHHGDLLSDPDITPCVDNVHSFTAAFLFSLETQTTIGYGYRCVTEECSVAVLTVILQSILSCIINTFIIGAALAKMATARKRAQTIRFSYFALIGMRDGKLCLMWRIGDFRPNHVVEGTVRAQLLRYSEDSEGRMTMAFKDLKLVNDQIILVTPVTIVHEIDHESPLYALDRKAVAKDNFEILVTFIYTGDSTGTSHQSRSSYVPREILWGHRFHDVLEVKRKYYKVNCLQFEGSVEVYAPFCSAKQLDWKDQQLNNLEKTSPARGSCTSDTNTRRRSFSAVAMVSSCENPEETSLSPQDECKEVPYQKALLTLNRISMESQM.

The Cytoplasmic portion of the chain corresponds to methionine 1 to aspartate 67. A helical membrane pass occupies residues threonine 68–leucine 94. At isoleucine 95–serine 117 the chain is on the extracellular side. Residues phenylalanine 118 to tyrosine 134 constitute an intramembrane region (helical; Pore-forming). The Selectivity filter motif lies at threonine 131–tyrosine 136. The Extracellular segment spans residues glycine 135–cysteine 143. Residues serine 144–lysine 171 traverse the membrane as a helical segment. The Cytoplasmic segment spans residues methionine 172–methionine 419. A phosphoserine mark is found at serine 358, serine 374, and serine 376.

This sequence belongs to the inward rectifier-type potassium channel (TC 1.A.2.1) family. KCNJ16 subfamily. As to quaternary structure, it forms heteromeric channels with Kir4.1/KCNJ10; this interaction is required for KCNJ16 localization to the basolateral membrane in kidney cells. As a heteromer with KCNJ10, may interact with MAGI1; this interaction may facilitate KCNJ10/KCNJ16 potassium channel expression at the basolateral membrane in kidney cells. May form heteromers with Kir2.1/KCNJ2. Can form heteromeric channels with Kir4.2/KCNJ15. In terms of tissue distribution, expressed in the brain, testis, liver, spleen, kidney, submaxillary gland and adrenals. In the kidney, expressed in the epithelial cells of both proximal and distal convoluted tubules, in the endothelial cells surrounding glomerular capillaries and in the flattened parietal layer of Bowman's capsule.

The protein resides in the membrane. Its subcellular location is the basolateral cell membrane. The enzyme catalyses K(+)(in) = K(+)(out). Channel activity is strongly regulated by variations of cytosolic pH; channels are activated by alkaline and inhibited by acidic pH values. Activated by phosphatidylinositol 4,5 biphosphate (PtdIns(4,5)P2). Its function is as follows. Inward rectifier potassium channels are characterized by a greater tendency to allow potassium to flow into the cell rather than out of it. Their voltage dependence is regulated by the concentration of extracellular potassium; as external potassium is raised, the voltage range of the channel opening shifts to more positive voltages. The inward rectification is mainly due to the blockage of outward current by internal magnesium. KCNJ16 may be involved in the regulation of fluid and pH balance. In the kidney, together with KCNJ10, mediates basolateral K(+) recycling in distal tubules; this process is critical for Na(+) reabsorption at the tubules. In Rattus norvegicus (Rat), this protein is Inward rectifier potassium channel 16 (Kcnj16).